The following is a 355-amino-acid chain: cGAMP-activated phospholipase (355 aa).

In terms of domain architecture, PNPLA spans 17–214; it reads LSLNGGGARG…VANNPSFIGL (198 aa). Residues 21-26 carry the GXGXXG motif; it reads GGGARG. The GXSXG signature appears at 60–64; that stretch reads GTSIG. The Nucleophile role is filled by Ser62. The active-site Proton acceptor is Asp201. A DGA/G motif is present at residues 201–203; it reads DGG.

This sequence belongs to the patatin family.

The catalysed reaction is a 1,2-diacyl-sn-glycero-3-phosphocholine + H2O = a 2-acyl-sn-glycero-3-phosphocholine + a fatty acid + H(+). The enzyme catalyses 1,2-di-(9Z-octadecenoyl)-sn-glycero-3-phosphoethanolamine + 2 H2O = sn-glycero-3-phosphoethanolamine + 2 (9Z)-octadecenoate + 2 H(+). Its activity is regulated as follows. Phospholipase activity is specifically activated upon 3',3'-cGAMP (cGAMP) binding. Is not activated by the other cyclic dinucleotides 3',3'-cUAMP, 3',3'-c-diAMP and 3',3'-c-diGMP. Therefore, is specifically activated by only the nucleotide synthesized from its adjacently encoded nucleotidyltransferase (DncV). The cGAMP-activation of lipase is inhibited by T4 phage protein Acb2 (Vs.4). In terms of biological role, effector phospholipase of a CBASS antiviral system. CBASS (cyclic oligonucleotide-based antiphage signaling system) provides immunity against bacteriophages. The CD-NTase protein (DncV) synthesizes cyclic nucleotides in response to infection; these serve as specific second messenger signals. The signals activate a diverse range of effectors, leading to bacterial cell death and thus abortive phage infection. A type II-A(GA) CBASS system. Its function is as follows. Phospholipase that is activated upon binding to the cyclic dinucleotide (CDN) second messenger 3',3'-cyclic GMP-AMP (3',3'-cGAMP). Then degrades phosphatidylethanolamine (PE) and phosphatidylglycerol (PG), the major phospholipids in the cell membrane of V.cholerae, releasing 16:1 and 18:1 free fatty acids. Upon expression in E.coli with cognate DncV, the cell inner membrane shrinks and separates from the cell wall. Functionally, protects E.coli against phage infection. When the CBASS operon (capV-dncV-cap2-cap3) is introduced in E.coli MG1655 there is about 100-fold protection against phages P1 and T2. When the operon is introduced in E.coli MG1655 there is a more than 10(3) decrease in the efficiency of T2 plaque formation. Protects 100-fold against phage T5, offers no protection against T7. When the operon is introduced in E.coli MG1655 it protects against phages T2, T4, T5 and T6. Another paper shows the operon confers protection against phages P1, T2, T5 and T6 but not T4 or lambda. This is cGAMP-activated phospholipase from Vibrio cholerae serotype O1 (strain ATCC 39315 / El Tor Inaba N16961).